Consider the following 224-residue polypeptide: Adenylate kinase (224 aa).

An ATP-binding site is contributed by 10 to 15; the sequence is GSGKGT. An NMP region spans residues 30 to 59; that stretch reads ESGAIFRENISKGTELGAKAKEYIDRGDLV. AMP-binding positions include Ser31, Arg36, 57–59, 85–88, and Gln92; these read DLV and GFPR. Residues 126–165 form an LID region; the sequence is GRRLCVNDNNHPNNIFIDAIKPDGDKCRVCGGELKTRSDD. An ATP-binding site is contributed by Arg127. AMP is bound by residues Arg162 and Arg174. Residue Pro211 coordinates ATP.

It belongs to the adenylate kinase family. In terms of assembly, monomer.

Its subcellular location is the cytoplasm. It carries out the reaction AMP + ATP = 2 ADP. The protein operates within purine metabolism; AMP biosynthesis via salvage pathway; AMP from ADP: step 1/1. Catalyzes the reversible transfer of the terminal phosphate group between ATP and AMP. Plays an important role in cellular energy homeostasis and in adenine nucleotide metabolism. The chain is Adenylate kinase from Desulfosudis oleivorans (strain DSM 6200 / JCM 39069 / Hxd3) (Desulfococcus oleovorans).